The sequence spans 191 residues: UPF0312 protein Sden_2128 (191 aa).

A signal peptide spans 1 to 22 (MKKHLLASLLGASLLLPTAVNA).

The protein belongs to the UPF0312 family. Type 1 subfamily.

It localises to the periplasm. This Shewanella denitrificans (strain OS217 / ATCC BAA-1090 / DSM 15013) protein is UPF0312 protein Sden_2128.